The following is a 63-amino-acid chain: MFTVFLLVVLATTVVSSPSDRASDGRNAAANEKASDVIALALKGCCSNPVCHLEHSNMCGRRR.

Positions 1–16 (MFTVFLLVVLATTVVS) are cleaved as a signal peptide. Positions 17-43 (SPSDRASDGRNAAANEKASDVIALALK) are excised as a propeptide. Intrachain disulfides connect C45-C51 and C46-C59. M58 carries the methionine sulfoxide; partial modification. At C59 the chain carries Cysteine amide; partial.

This sequence belongs to the conotoxin A superfamily. Expressed by the venom duct.

The protein resides in the secreted. Alpha-conotoxins act on postsynaptic membranes, they bind to the nicotinic acetylcholine receptors (nAChR) and thus inhibit them. In Conus stercusmuscarum (Fly-specked cone), this protein is Alpha-conotoxin-like Sm1.3.